The sequence spans 431 residues: Bifunctional protein GlmU (431 aa).

Residues M1–K223 are pyrophosphorylase. UDP-N-acetyl-alpha-D-glucosamine contacts are provided by residues L8–G11, K22, Q74, and G81–T82. Residue D102 coordinates Mg(2+). UDP-N-acetyl-alpha-D-glucosamine contacts are provided by G135, E149, N164, and N221. Position 221 (N221) interacts with Mg(2+). The interval A224–E244 is linker. Residues G245–K431 form an N-acetyltransferase region. UDP-N-acetyl-alpha-D-glucosamine contacts are provided by R308 and K325. The Proton acceptor role is filled by H336. 2 residues coordinate UDP-N-acetyl-alpha-D-glucosamine: Y339 and N350. Acetyl-CoA is bound by residues A353, N359–Y360, S378, A396, and R413.

This sequence in the N-terminal section; belongs to the N-acetylglucosamine-1-phosphate uridyltransferase family. The protein in the C-terminal section; belongs to the transferase hexapeptide repeat family. Homotrimer. It depends on Mg(2+) as a cofactor.

The protein resides in the cytoplasm. The enzyme catalyses alpha-D-glucosamine 1-phosphate + acetyl-CoA = N-acetyl-alpha-D-glucosamine 1-phosphate + CoA + H(+). The catalysed reaction is N-acetyl-alpha-D-glucosamine 1-phosphate + UTP + H(+) = UDP-N-acetyl-alpha-D-glucosamine + diphosphate. The protein operates within nucleotide-sugar biosynthesis; UDP-N-acetyl-alpha-D-glucosamine biosynthesis; N-acetyl-alpha-D-glucosamine 1-phosphate from alpha-D-glucosamine 6-phosphate (route II): step 2/2. It functions in the pathway nucleotide-sugar biosynthesis; UDP-N-acetyl-alpha-D-glucosamine biosynthesis; UDP-N-acetyl-alpha-D-glucosamine from N-acetyl-alpha-D-glucosamine 1-phosphate: step 1/1. Its pathway is bacterial outer membrane biogenesis; LPS lipid A biosynthesis. In terms of biological role, catalyzes the last two sequential reactions in the de novo biosynthetic pathway for UDP-N-acetylglucosamine (UDP-GlcNAc). The C-terminal domain catalyzes the transfer of acetyl group from acetyl coenzyme A to glucosamine-1-phosphate (GlcN-1-P) to produce N-acetylglucosamine-1-phosphate (GlcNAc-1-P), which is converted into UDP-GlcNAc by the transfer of uridine 5-monophosphate (from uridine 5-triphosphate), a reaction catalyzed by the N-terminal domain. This chain is Bifunctional protein GlmU, found in Wolinella succinogenes (strain ATCC 29543 / DSM 1740 / CCUG 13145 / JCM 31913 / LMG 7466 / NCTC 11488 / FDC 602W) (Vibrio succinogenes).